We begin with the raw amino-acid sequence, 182 residues long: Sec-independent protein translocase protein TatB (182 aa).

The helical transmembrane segment at 1–21 threads the bilayer; it reads MFDIGFSELLLVFVIGLIVLG. Disordered stretches follow at residues 87-107 and 121-182; these read QAAESMKRTYSANDPEQASDE and TQHE…SDKP. Low complexity predominate over residues 168–182; it reads AAPVVESSPSSSDKP.

The protein belongs to the TatB family. The Tat system comprises two distinct complexes: a TatABC complex, containing multiple copies of TatA, TatB and TatC subunits, and a separate TatA complex, containing only TatA subunits. Substrates initially bind to the TatABC complex, which probably triggers association of the separate TatA complex to form the active translocon.

The protein localises to the cell inner membrane. In terms of biological role, part of the twin-arginine translocation (Tat) system that transports large folded proteins containing a characteristic twin-arginine motif in their signal peptide across membranes. Together with TatC, TatB is part of a receptor directly interacting with Tat signal peptides. TatB may form an oligomeric binding site that transiently accommodates folded Tat precursor proteins before their translocation. The polypeptide is Sec-independent protein translocase protein TatB (Salmonella choleraesuis (strain SC-B67)).